A 142-amino-acid chain; its full sequence is Large-conductance mechanosensitive channel (142 aa).

3 helical membrane passes run 10-30 (FAVK…GAFG), 40-60 (LIMP…LFIV), and 86-106 (GNFI…FVMV).

This sequence belongs to the MscL family. In terms of assembly, homopentamer.

It localises to the cell inner membrane. In terms of biological role, channel that opens in response to stretch forces in the membrane lipid bilayer. May participate in the regulation of osmotic pressure changes within the cell. The chain is Large-conductance mechanosensitive channel from Acidovorax ebreus (strain TPSY) (Diaphorobacter sp. (strain TPSY)).